The sequence spans 253 residues: 2,3-bisphosphoglycerate-dependent phosphoglycerate mutase (253 aa).

Residues 12 to 19, 25 to 26, arginine 64, 91 to 94, lysine 102, and 118 to 119 each bind substrate; these read RHGESEWN, TG, ERHY, and RR. Histidine 13 serves as the catalytic Tele-phosphohistidine intermediate. Glutamate 91 serves as the catalytic Proton donor/acceptor. The tract at residues 126–148 is disordered; it reads PPLADGSEFSQSDDPRYASIPPE. 187 to 188 is a binding site for substrate; sequence GN.

It belongs to the phosphoglycerate mutase family. BPG-dependent PGAM subfamily.

The enzyme catalyses (2R)-2-phosphoglycerate = (2R)-3-phosphoglycerate. The protein operates within carbohydrate degradation; glycolysis; pyruvate from D-glyceraldehyde 3-phosphate: step 3/5. In terms of biological role, catalyzes the interconversion of 2-phosphoglycerate and 3-phosphoglycerate. In Streptomyces avermitilis (strain ATCC 31267 / DSM 46492 / JCM 5070 / NBRC 14893 / NCIMB 12804 / NRRL 8165 / MA-4680), this protein is 2,3-bisphosphoglycerate-dependent phosphoglycerate mutase.